The chain runs to 154 residues: Large ribosomal subunit protein uL13 (154 aa).

It belongs to the universal ribosomal protein uL13 family. In terms of assembly, part of the 50S ribosomal subunit.

Functionally, this protein is one of the early assembly proteins of the 50S ribosomal subunit, although it is not seen to bind rRNA by itself. It is important during the early stages of 50S assembly. This Rhizobium meliloti (strain 1021) (Ensifer meliloti) protein is Large ribosomal subunit protein uL13.